A 220-amino-acid polypeptide reads, in one-letter code: MTWSDILAEEKQKPYFKQILDFLACESAKGKVIFPTKENIFNAFKYTELDNLKVVILGQDPYHNYNQAHGLAFSVQKGVDIPPSLQNIYKELARSIPEFKTPNHGYLVDWAKQGVFLLNTTLTVEAHKANSHKDIGWETFTDTVINKISENKHNVVFMLWGSHARKKKVLIDSSRHLILESTHPSPLSAHRGFLGCNHFVDCNKYLIEKKDQKIDWNLLC.

Asp60 functions as the Proton acceptor in the catalytic mechanism.

Belongs to the uracil-DNA glycosylase (UDG) superfamily. UNG family.

The protein localises to the cytoplasm. It catalyses the reaction Hydrolyzes single-stranded DNA or mismatched double-stranded DNA and polynucleotides, releasing free uracil.. Functionally, excises uracil residues from the DNA which can arise as a result of misincorporation of dUMP residues by DNA polymerase or due to deamination of cytosine. In Francisella tularensis subsp. tularensis (strain FSC 198), this protein is Uracil-DNA glycosylase.